Here is a 117-residue protein sequence, read N- to C-terminus: U9-theraphotoxin-Hhn1a (117 aa).

The N-terminal stretch at 1–21 (MNTVRVTFLLVFVLAVSLGQA) is a signal peptide. The propeptide occupies 22 to 75 (DEDGNRMEMRQEIEKTEADSSYFAENLLLQKLEELEAKLWEETSEESRNSRQKR). Intrachain disulfides connect Cys-76–Cys-94, Cys-83–Cys-99, and Cys-93–Cys-114.

The protein belongs to the neurotoxin 14 (magi-1) family. 01 (HNTX-16) subfamily. As to expression, expressed by the venom gland.

Its subcellular location is the secreted. In terms of biological role, probable ion channel inhibitor. The polypeptide is U9-theraphotoxin-Hhn1a (Cyriopagopus hainanus (Chinese bird spider)).